A 66-amino-acid polypeptide reads, in one-letter code: Large ribosomal subunit protein uL29 (66 aa).

The protein belongs to the universal ribosomal protein uL29 family.

This chain is Large ribosomal subunit protein uL29, found in Francisella tularensis subsp. tularensis (strain FSC 198).